The following is a 313-amino-acid chain: MAALTDFAFMYRWFKNCNLVKNLSEKYVFITGCDSGFGNLLAKQLVDRGMKVLAACLTEEGAQKLLQDTSHQLQTFLLDVTKSENVKEAAQWVRDQVGEQGLWALVNNAGVGLPSGPNEWLTIKDFVKVININLVGLIDVTLNMLPMIKKARGRVVNMSSSGGRVAIFGGGYCVSKFGVEAFSDSIRRELHFFGVKVSIIEPGNYKTSILGQEALESRMKKLWDRLPQETRDSYGEEYFQTYTKKLVNLMRSAEPRISDVTNSMEHAIVSRSPRIRYNPGLDVKFLYLTLAKLPTPVTDFILSRYLPRPADSV.

29-53 (FITGCDSGFGNLLAKQLVDRGMKVL) is a binding site for NADP(+). Substrate is bound at residue Ser-160. Tyr-172 acts as the Proton acceptor in catalysis. Ser-185 bears the Phosphoserine mark.

The protein belongs to the short-chain dehydrogenases/reductases (SDR) family. In terms of tissue distribution, highly expressed in liver.

Its subcellular location is the cytoplasm. It carries out the reaction a N-[omega-(9R,10R)-epoxy-(13R)-hydroxy-(11E)-octadecenoyloxy]acyl-beta-D-glucosyl-(1&lt;-&gt;1)-sphing-4E-enine + NAD(+) = a N-[omega-(9R,10R)-epoxy-13-oxo-(11E)-octadecenoyloxy]acyl-beta-D-glucosyl-(1&lt;-&gt;1)-sphing-4E-enine + NADH + H(+). It catalyses the reaction a N-[omega-(9R,10R)-epoxy-(13R)-hydroxy-(11E)-octadecenoyloxy]-acylsphing-4E-enine + NAD(+) = a N-[omega-(9R,10R)-epoxy-13-oxo-(11E)-octadecenoyloxy]-acylsphing-4E-enine + NADH + H(+). Plays a crucial role in the formation of the epidermal permeability barrier. Catalyzes the NAD+-dependent dehydrogenation of the linoleate 9,10-trans-epoxy-11E-13-alcohol esterified in omega-O-acylceramides (such as in N-[omega-(9R,10R)-epoxy-(13R)-hydroxy-(11E)-octadecenoyloxy]-acylsphing-4E-enine) to the corresponding 13-ketone, the reactive moiety required for binding of epidermal ceramides to proteins. Displays weak conversion of all-trans-retinal to all-trans-retinol in the presence of NADH. Has apparently no steroid dehydrogenase activity. In Mus musculus (Mouse), this protein is Short-chain dehydrogenase/reductase family 9C member 7 (Sdr9c7).